A 541-amino-acid chain; its full sequence is Ankyrin repeat domain-containing protein 13C (541 aa).

The span at 1–20 (MTGEKIRSLRRDHKPSKEEG) shows a compositional bias: basic and acidic residues. The tract at residues 1-27 (MTGEKIRSLRRDHKPSKEEGDLLEPGD) is disordered. ANK repeat units follow at residues 111–142 (PAHY…QKDN), 143–172 (HGNT…PVKV), and 176–205 (QGWS…QQSR). S411 bears the Phosphoserine mark.

Its subcellular location is the endoplasmic reticulum membrane. Acts as a molecular chaperone for G protein-coupled receptors, regulating their biogenesis and exit from the ER. The protein is Ankyrin repeat domain-containing protein 13C (ANKRD13C) of Homo sapiens (Human).